Consider the following 293-residue polypeptide: NAD kinase (293 aa).

Asp-73 functions as the Proton acceptor in the catalytic mechanism. NAD(+) contacts are provided by residues 73 to 74, 147 to 148, His-158, Arg-175, Asp-177, 188 to 193, and Gln-248; these read DG, NE, and TAYSLS.

It belongs to the NAD kinase family. The cofactor is a divalent metal cation.

The protein resides in the cytoplasm. It catalyses the reaction NAD(+) + ATP = ADP + NADP(+) + H(+). Its function is as follows. Involved in the regulation of the intracellular balance of NAD and NADP, and is a key enzyme in the biosynthesis of NADP. Catalyzes specifically the phosphorylation on 2'-hydroxyl of the adenosine moiety of NAD to yield NADP. This chain is NAD kinase, found in Photobacterium profundum (strain SS9).